Reading from the N-terminus, the 121-residue chain is Small ribosomal subunit protein uS13 (121 aa).

Residues 94–121 (GLPMRGQRTRTNARTRKGPRKAAAALKK) form a disordered region.

Belongs to the universal ribosomal protein uS13 family. In terms of assembly, part of the 30S ribosomal subunit. Forms a loose heterodimer with protein S19. Forms two bridges to the 50S subunit in the 70S ribosome.

In terms of biological role, located at the top of the head of the 30S subunit, it contacts several helices of the 16S rRNA. In the 70S ribosome it contacts the 23S rRNA (bridge B1a) and protein L5 of the 50S subunit (bridge B1b), connecting the 2 subunits; these bridges are implicated in subunit movement. Contacts the tRNAs in the A and P-sites. The sequence is that of Small ribosomal subunit protein uS13 from Polaromonas sp. (strain JS666 / ATCC BAA-500).